A 129-amino-acid chain; its full sequence is Small ribosomal subunit protein uS11 (129 aa).

This sequence belongs to the universal ribosomal protein uS11 family. As to quaternary structure, part of the 30S ribosomal subunit. Interacts with proteins S7 and S18. Binds to IF-3.

In terms of biological role, located on the platform of the 30S subunit, it bridges several disparate RNA helices of the 16S rRNA. Forms part of the Shine-Dalgarno cleft in the 70S ribosome. In Stenotrophomonas maltophilia (strain R551-3), this protein is Small ribosomal subunit protein uS11.